The following is a 291-amino-acid chain: Lipoyl synthase (291 aa).

Residues cysteine 35, cysteine 40, cysteine 46, cysteine 61, cysteine 65, cysteine 68, and serine 273 each contribute to the [4Fe-4S] cluster site. The region spanning phenylalanine 47 to glutamate 262 is the Radical SAM core domain.

This sequence belongs to the radical SAM superfamily. Lipoyl synthase family. Requires [4Fe-4S] cluster as cofactor.

The protein resides in the cytoplasm. The enzyme catalyses [[Fe-S] cluster scaffold protein carrying a second [4Fe-4S](2+) cluster] + N(6)-octanoyl-L-lysyl-[protein] + 2 oxidized [2Fe-2S]-[ferredoxin] + 2 S-adenosyl-L-methionine + 4 H(+) = [[Fe-S] cluster scaffold protein] + N(6)-[(R)-dihydrolipoyl]-L-lysyl-[protein] + 4 Fe(3+) + 2 hydrogen sulfide + 2 5'-deoxyadenosine + 2 L-methionine + 2 reduced [2Fe-2S]-[ferredoxin]. Its pathway is protein modification; protein lipoylation via endogenous pathway; protein N(6)-(lipoyl)lysine from octanoyl-[acyl-carrier-protein]: step 2/2. In terms of biological role, catalyzes the radical-mediated insertion of two sulfur atoms into the C-6 and C-8 positions of the octanoyl moiety bound to the lipoyl domains of lipoate-dependent enzymes, thereby converting the octanoylated domains into lipoylated derivatives. The polypeptide is Lipoyl synthase (Citrifermentans bemidjiense (strain ATCC BAA-1014 / DSM 16622 / JCM 12645 / Bem) (Geobacter bemidjiensis)).